The sequence spans 281 residues: Probable endonuclease 4 (281 aa).

Positions 67, 107, 144, 178, 181, 215, 228, 230, and 260 each coordinate Zn(2+).

The protein belongs to the AP endonuclease 2 family. Zn(2+) is required as a cofactor.

It carries out the reaction Endonucleolytic cleavage to 5'-phosphooligonucleotide end-products.. Functionally, endonuclease IV plays a role in DNA repair. It cleaves phosphodiester bonds at apurinic or apyrimidinic (AP) sites, generating a 3'-hydroxyl group and a 5'-terminal sugar phosphate. The polypeptide is Probable endonuclease 4 (Methanocorpusculum labreanum (strain ATCC 43576 / DSM 4855 / Z)).